Consider the following 473-residue polypeptide: Mannose-1-phosphate guanylyltransferase (473 aa).

Belongs to the mannose-6-phosphate isomerase type 2 family. As to quaternary structure, homodimer.

The catalysed reaction is alpha-D-mannose 1-phosphate + GTP + H(+) = GDP-alpha-D-mannose + diphosphate. It participates in nucleotide-sugar biosynthesis; GDP-alpha-D-mannose biosynthesis; GDP-alpha-D-mannose from alpha-D-mannose 1-phosphate (GTP route): step 1/1. Its pathway is bacterial outer membrane biogenesis; LPS O-antigen biosynthesis. In terms of biological role, involved in GDP-mannose biosynthesis which serves as the activated sugar nucleotide precursor for mannose residues in cell surface polysaccharides. This enzyme participates in synthesis of the LPS group C2 O antigen. The polypeptide is Mannose-1-phosphate guanylyltransferase (rfbM) (Salmonella muenchen).